We begin with the raw amino-acid sequence, 136 residues long: 6,7-dimethyl-8-ribityllumazine synthase (136 aa).

5-amino-6-(D-ribitylamino)uracil is bound by residues Phe11, 43 to 45, and 67 to 69; these read SFD and AVI. 72–73 lines the (2S)-2-hydroxy-3-oxobutyl phosphate pocket; that stretch reads ET. Catalysis depends on His75, which acts as the Proton donor. 5-amino-6-(D-ribitylamino)uracil is bound at residue Leu100. Arg115 is a (2S)-2-hydroxy-3-oxobutyl phosphate binding site.

The protein belongs to the DMRL synthase family.

The enzyme catalyses (2S)-2-hydroxy-3-oxobutyl phosphate + 5-amino-6-(D-ribitylamino)uracil = 6,7-dimethyl-8-(1-D-ribityl)lumazine + phosphate + 2 H2O + H(+). The protein operates within cofactor biosynthesis; riboflavin biosynthesis; riboflavin from 2-hydroxy-3-oxobutyl phosphate and 5-amino-6-(D-ribitylamino)uracil: step 1/2. Its function is as follows. Catalyzes the formation of 6,7-dimethyl-8-ribityllumazine by condensation of 5-amino-6-(D-ribitylamino)uracil with 3,4-dihydroxy-2-butanone 4-phosphate. This is the penultimate step in the biosynthesis of riboflavin. This Picrophilus torridus (strain ATCC 700027 / DSM 9790 / JCM 10055 / NBRC 100828 / KAW 2/3) protein is 6,7-dimethyl-8-ribityllumazine synthase.